Consider the following 914-residue polypeptide: PHD finger protein 14 (914 aa).

Residues 19–276 (DALDYDSSDD…EDSLLERPQT (258 aa)) form a disordered region. A compositionally biased stretch (low complexity) spans 53-68 (ESAAGSESDSDAAAAS). The span at 90–102 (EKVKESFSEETSS) shows a compositional bias: basic and acidic residues. Acidic residues-rich tracts occupy residues 155–168 (ELNEMDDYDSEDDN) and 191–233 (GEED…DSEE). Residues 285–346 (ILICCVCLGD…PWFCDACKNG (62 aa)) form a PHD-type 1 zinc finger. Positions 288, 291, 305, 308, 313, 316, 340, 343, 351, 354, 371, 374, 407, 410, 424, 429, 434, 437, 461, and 464 each coordinate Zn(2+). The segment at 348–381 (SPSCELCPSQDGIFKETDAGRWVHVVCALYVPGV) adopts a C2HC pre-PHD-type zinc-finger fold. The segment at 405-465 (KECSLCEDTR…PFFAYCKQHA (61 aa)) adopts a PHD-type 2 zinc-finger fold. Positions 596–644 (MIQIQDNIVEQKNLKDKLESEQEKLHMEYDKLCESLEDLQNVNGQLRTE) form a coiled coil. A PHD-type 3 zinc finger spans residues 692 to 746 (LYSCGICKKNQDQHLLLLCDTCKLHYHLGCLDPPLTRMPKKTKNSYWQCSECDQA). The Zn(2+) site is built by cysteine 695, cysteine 698, cysteine 710, cysteine 713, histidine 718, cysteine 721, cysteine 740, and cysteine 743. The segment at 777–838 (PQEMSPEPKK…PKADDTRTEC (62 aa)) is disordered. Over residues 792-802 (TRTRGQKRKRM) the composition is skewed to basic residues. Over residues 803–817 (SICEEEKMEEPLPRE) the composition is skewed to basic and acidic residues. The PHD-type 4 zinc-finger motif lies at 835–888 (RTECTTCKGPGDNENLVRCDECRLCYHFGCLDPPLKKSPKQTGYGWICQECDTS). Zn(2+)-binding residues include cysteine 838, cysteine 841, cysteine 853, cysteine 856, histidine 861, cysteine 864, cysteine 882, and cysteine 885. The segment at 887–914 (TSSSKEEEAQEVEEESVNEETAEQEIPD) is disordered. Residues 894 to 914 (EAQEVEEESVNEETAEQEIPD) show a composition bias toward acidic residues.

Interacts with histone H3.

The protein localises to the nucleus. Its function is as follows. Histone-binding protein. Binds preferentially to unmodified histone H3 but can also bind to a lesser extent to histone H3 trimethylated at 'Lys-9' (H3K9me3) as well as to histone H3 monomethylated at 'Lys-27' (H3K27ac) and trimethylated at 'Lys-27' (H3K27me3). Represses PDGFRA expression, thus playing a role in regulation of mesenchymal cell proliferation. The sequence is that of PHD finger protein 14 from Danio rerio (Zebrafish).